We begin with the raw amino-acid sequence, 96 residues long: Large ribosomal subunit protein bL21 (96 aa).

This sequence belongs to the bacterial ribosomal protein bL21 family. As to quaternary structure, part of the 50S ribosomal subunit. Contacts protein L20.

This protein binds to 23S rRNA in the presence of protein L20. The polypeptide is Large ribosomal subunit protein bL21 (Hydrogenobaculum sp. (strain Y04AAS1)).